A 178-amino-acid chain; its full sequence is uncharacterized protein (178 aa).

In terms of domain architecture, N-acetyltransferase spans 9–173 (LTLRKMELED…IDVYMFSLLK (165 aa)).

This is an uncharacterized protein from Bacillus licheniformis.